Consider the following 157-residue polypeptide: Small ribosomal subunit protein uS9 (157 aa).

The protein belongs to the universal ribosomal protein uS9 family.

The chain is Small ribosomal subunit protein uS9 from Caulobacter sp. (strain K31).